The following is a 306-amino-acid chain: 4-hydroxy-3-methylbut-2-enyl diphosphate reductase (306 aa).

Cys12 contacts [4Fe-4S] cluster. (2E)-4-hydroxy-3-methylbut-2-enyl diphosphate is bound by residues His41 and His74. Dimethylallyl diphosphate contacts are provided by His41 and His74. Isopentenyl diphosphate is bound by residues His41 and His74. A [4Fe-4S] cluster-binding site is contributed by Cys96. Position 124 (His124) interacts with (2E)-4-hydroxy-3-methylbut-2-enyl diphosphate. His124 serves as a coordination point for dimethylallyl diphosphate. His124 contributes to the isopentenyl diphosphate binding site. Glu126 acts as the Proton donor in catalysis. Position 164 (Thr164) interacts with (2E)-4-hydroxy-3-methylbut-2-enyl diphosphate. [4Fe-4S] cluster is bound at residue Cys194. Positions 222, 223, 224, and 266 each coordinate (2E)-4-hydroxy-3-methylbut-2-enyl diphosphate. Positions 222, 223, 224, and 266 each coordinate dimethylallyl diphosphate. Ser222, Ser223, Asn224, and Ser266 together coordinate isopentenyl diphosphate.

The protein belongs to the IspH family. It depends on [4Fe-4S] cluster as a cofactor.

It carries out the reaction isopentenyl diphosphate + 2 oxidized [2Fe-2S]-[ferredoxin] + H2O = (2E)-4-hydroxy-3-methylbut-2-enyl diphosphate + 2 reduced [2Fe-2S]-[ferredoxin] + 2 H(+). The catalysed reaction is dimethylallyl diphosphate + 2 oxidized [2Fe-2S]-[ferredoxin] + H2O = (2E)-4-hydroxy-3-methylbut-2-enyl diphosphate + 2 reduced [2Fe-2S]-[ferredoxin] + 2 H(+). It functions in the pathway isoprenoid biosynthesis; dimethylallyl diphosphate biosynthesis; dimethylallyl diphosphate from (2E)-4-hydroxy-3-methylbutenyl diphosphate: step 1/1. The protein operates within isoprenoid biosynthesis; isopentenyl diphosphate biosynthesis via DXP pathway; isopentenyl diphosphate from 1-deoxy-D-xylulose 5-phosphate: step 6/6. Catalyzes the conversion of 1-hydroxy-2-methyl-2-(E)-butenyl 4-diphosphate (HMBPP) into a mixture of isopentenyl diphosphate (IPP) and dimethylallyl diphosphate (DMAPP). Acts in the terminal step of the DOXP/MEP pathway for isoprenoid precursor biosynthesis. In Dechloromonas aromatica (strain RCB), this protein is 4-hydroxy-3-methylbut-2-enyl diphosphate reductase.